The chain runs to 277 residues: Large ribosomal subunit protein uL2 (277 aa).

3 disordered regions span residues 1–20, 27–55, and 207–277; these read MGIRTFRPYTPGTRQASVSD, TQPEKSLTTYKHSSQGRNNRGVVTSRHRG, and KAGR…RNQS. The segment covering 27–48 has biased composition (polar residues); it reads TQPEKSLTTYKHSSQGRNNRGV. Composition is skewed to basic residues over residues 207 to 220 and 259 to 277; these read KAGRSRHRGKRPHV and TRNRKKASSKLIIRRRNQS.

The protein belongs to the universal ribosomal protein uL2 family. In terms of assembly, part of the 50S ribosomal subunit. Forms a bridge to the 30S subunit in the 70S ribosome.

In terms of biological role, one of the primary rRNA binding proteins. Required for association of the 30S and 50S subunits to form the 70S ribosome, for tRNA binding and peptide bond formation. It has been suggested to have peptidyltransferase activity; this is somewhat controversial. Makes several contacts with the 16S rRNA in the 70S ribosome. This chain is Large ribosomal subunit protein uL2, found in Gloeothece citriformis (strain PCC 7424) (Cyanothece sp. (strain PCC 7424)).